We begin with the raw amino-acid sequence, 108 residues long: Peptidyl-prolyl cis-trans isomerase FKBP1A (108 aa).

Residues 20-108 enclose the PPIase FKBP-type domain; the sequence is GQTVVVHYVG…TFDVELLRLE (89 aa).

Belongs to the FKBP-type PPIase family. FKBP1 subfamily.

The protein localises to the cytoplasm. The enzyme catalyses [protein]-peptidylproline (omega=180) = [protein]-peptidylproline (omega=0). Its activity is regulated as follows. Inhibited by both FK506 and rapamycin. Functionally, keeps in an inactive conformation TGFBR1, the TGF-beta type I serine/threonine kinase receptor, preventing TGF-beta receptor activation in absence of ligand. May modulate the RYR1 calcium channel activity. PPIases accelerate the folding of proteins. It catalyzes the cis-trans isomerization of proline imidic peptide bonds in oligopeptides. This Xenopus laevis (African clawed frog) protein is Peptidyl-prolyl cis-trans isomerase FKBP1A (fkbp1a).